The following is a 192-amino-acid chain: Ribosome maturation factor RimM (192 aa).

The region spanning 97-172 is the PRC barrel domain; the sequence is EDEYYLADLI…VVLADPPALV (76 aa). The tract at residues 168 to 192 is disordered; the sequence is PPALVGEPEGPESPAEDDDGERHYD.

This sequence belongs to the RimM family. As to quaternary structure, binds ribosomal protein uS19.

Its subcellular location is the cytoplasm. Functionally, an accessory protein needed during the final step in the assembly of 30S ribosomal subunit, possibly for assembly of the head region. Essential for efficient processing of 16S rRNA. May be needed both before and after RbfA during the maturation of 16S rRNA. It has affinity for free ribosomal 30S subunits but not for 70S ribosomes. The polypeptide is Ribosome maturation factor RimM (Caulobacter sp. (strain K31)).